The following is a 157-amino-acid chain: UPF0251 protein CLM_1546 (157 aa).

Belongs to the UPF0251 family.

This chain is UPF0251 protein CLM_1546, found in Clostridium botulinum (strain Kyoto / Type A2).